The following is a 149-amino-acid chain: Large ribosomal subunit protein uL16 (149 aa).

It belongs to the universal ribosomal protein uL16 family. As to quaternary structure, part of the 50S ribosomal subunit.

In terms of biological role, binds 23S rRNA and is also seen to make contacts with the A and possibly P site tRNAs. This chain is Large ribosomal subunit protein uL16, found in Dehalococcoides mccartyi (strain ATCC BAA-2100 / JCM 16839 / KCTC 5957 / BAV1).